Reading from the N-terminus, the 459-residue chain is E3 ubiquitin-protein ligase RNF14 (459 aa).

One can recognise an RWD domain in the interval 10 to 129 (DELLALASIY…QFLKEETLDF (120 aa)). Residues 141–169 (SGSQPQCEPAQKHAADASGEKSKVQDLDP) form a disordered region. Residues 150-169 (AQKHAADASGEKSKVQDLDP) are compositionally biased toward basic and acidic residues. A TRIAD supradomain region spans residues 200 to 441 (KAFCCGICYS…NPDSPCYNQL (242 aa)). Residues Cys-204, Cys-207, Cys-222, His-224, Cys-227, Cys-230, Cys-249, Cys-254, Cys-293, Cys-298, Cys-313, Cys-316, Cys-321, Cys-324, His-329, Cys-334, Cys-388, and Cys-391 each coordinate Zn(2+). 2 RING-type zinc fingers span residues 204-249 (CGIC…CLNC) and 204-254 (CGIC…EPKC). Residues 273–334 (ARYDRLLLQS…RRSYHGLSHC (62 aa)) form an IBR-type zinc finger. The RING-type 2; atypical zinc-finger motif lies at 388-417 (CPCCGTNIQKAHGCNKMTCSSCQKYFCWIC). Residue Cys-401 is part of the active site. Zn(2+)-binding residues include Cys-406, Cys-409, Cys-414, Cys-417, His-429, and Cys-437.

This sequence belongs to the RBR family. RNF14 subfamily.

It is found in the cytoplasm. The protein resides in the nucleus. The enzyme catalyses [E2 ubiquitin-conjugating enzyme]-S-ubiquitinyl-L-cysteine + [acceptor protein]-L-lysine = [E2 ubiquitin-conjugating enzyme]-L-cysteine + [acceptor protein]-N(6)-ubiquitinyl-L-lysine.. Its pathway is protein modification; protein ubiquitination. Functionally, E3 ubiquitin-protein ligase that plays a key role in the RNF14-RNF25 translation quality control pathway, a pathway that takes place when a ribosome has stalled during translation, and which promotes ubiquitination and degradation of translation factors on stalled ribosomes. Recruited to stalled ribosomes by the ribosome collision sensor GCN1 and mediates 'Lys-6'-linked ubiquitination of target proteins, leading to their degradation. Mediates ubiquitination of eef1a1/eEF1A and etf1/eRF1 translation factors on stalled ribosomes, leading to their degradation. Specifically required to resolve RNA-protein cross-links caused by reactive aldehydes, which trigger translation stress by stalling ribosomes: acts by catalying 'Lys-6'-linked ubiquitination of RNA-protein cross-links, leading to their removal by the ATP-dependent unfoldase VCP and subsequent degradation by the proteasome. Independently of its function in the response to stalled ribosomes, acts as a regulator of transcription in Wnt signaling via its interaction with TCF transcription factors (tcf7/tcf1, tcf7l1/tcf3 and tcf7l2/tcf4). The chain is E3 ubiquitin-protein ligase RNF14 from Danio rerio (Zebrafish).